Reading from the N-terminus, the 737-residue chain is Protein-glucosylgalactosylhydroxylysine glucosidase (737 aa).

Substrate is bound at residue 300 to 301; it reads WD. Glu430 functions as the Proton donor in the catalytic mechanism. 498 to 499 contacts substrate; that stretch reads KQ. Residues 681–737 form a disordered region; sequence RSAGRIQMSPPKLPGSSSSEFPGRTFSDVRDPLQSPLWVTLGSSSPTESLTVDPASE. The span at 721–730 shows a compositional bias: polar residues; sequence LGSSSPTESL.

The protein belongs to the glycosyl hydrolase 65 family.

It carries out the reaction (5R)-5-O-[alpha-D-glucosyl-(1-&gt;2)-beta-D-galactosyl]-5-hydroxy-L-lysyl-[collagen] + H2O = (5R)-5-O-(beta-D-galactosyl)-5-hydroxy-L-lysyl-[collagen] + D-glucose. In terms of biological role, catalyzes the hydrolysis of glucose from the disaccharide unit linked to hydroxylysine residues of collagen and collagen-like proteins. The protein is Protein-glucosylgalactosylhydroxylysine glucosidase of Homo sapiens (Human).